The following is a 233-amino-acid chain: 5-demethoxyubiquinone hydroxylase, mitochondrial (233 aa).

The transit peptide at 1–15 (MLSRVSVFKPASRGF) directs the protein to the mitochondrion. Phosphoserine is present on residues Ser-20 and Ser-28. At Thr-32 the chain carries Phosphothreonine. Residues Glu-63, Glu-95, His-98, Glu-147, Glu-194, and His-197 each contribute to the Fe cation site.

Belongs to the COQ7 family. In terms of assembly, component of a multi-subunit COQ enzyme complex, composed of at least COQ3, COQ4, COQ5, COQ6, COQ7 and COQ9. It depends on Fe cation as a cofactor. Post-translationally, phosphorylated. Dephosphorylated by PTC7; dephosphorylation is essential for enzyme activation.

It is found in the mitochondrion inner membrane. The enzyme catalyses a 5-methoxy-2-methyl-3-(all-trans-polyprenyl)benzene-1,4-diol + AH2 + O2 = a 3-demethylubiquinol + A + H2O. It carries out the reaction a 5-methoxy-2-methyl-3-(all-trans-polyprenyl)benzoquinone + NADH + O2 = a 3-demethylubiquinone + NAD(+) + H2O. It functions in the pathway cofactor biosynthesis; ubiquinone biosynthesis. Dephosphorylation by PTC7 leads to activation. Its function is as follows. Catalyzes the hydroxylation of 2-hexaprenyl-3-methyl-6-methoxy-1,4-benzoquinol (DMQH2) during ubiquinone biosynthesis. Also catalyzes the hydroxylation of the 5-methoxy-2-methyl-3-(all-trans-polyprenyl)benzoquinone at the C6 position and participates in the biosynthesis of ubiquinone. Also has a structural role in the COQ enzyme complex, stabilizing COQ3 and COQ4 polypeptides. This is 5-demethoxyubiquinone hydroxylase, mitochondrial from Saccharomyces cerevisiae (strain ATCC 204508 / S288c) (Baker's yeast).